The primary structure comprises 450 residues: Saccharopine dehydrogenase [NADP(+), L-glutamate-forming] (450 aa).

NADP(+) contacts are provided by residues 9–12 (SGFV), 32–34 (CRT), 54–55 (DV), Ile75, 97–98 (TS), 124–126 (VDP), and Ser174. L-saccharopine-binding positions include 98-99 (SY) and Asp125. L-saccharopine contacts are provided by residues Arg223 and 244 to 246 (TLR).

The protein belongs to the saccharopine dehydrogenase family. In terms of assembly, homodimer.

Its subcellular location is the cytoplasm. The enzyme catalyses L-saccharopine + NADP(+) + H2O = (S)-2-amino-6-oxohexanoate + L-glutamate + NADPH + H(+). It functions in the pathway amino-acid biosynthesis; L-lysine biosynthesis via AAA pathway; L-lysine from L-alpha-aminoadipate (fungal route): step 2/3. The polypeptide is Saccharopine dehydrogenase [NADP(+), L-glutamate-forming] (Schizosaccharomyces pombe (strain 972 / ATCC 24843) (Fission yeast)).